A 139-amino-acid polypeptide reads, in one-letter code: Hydrogenase maturation factor HypA (139 aa).

Residue histidine 2 participates in Ni(2+) binding. 4 residues coordinate Zn(2+): cysteine 73, cysteine 76, cysteine 110, and cysteine 113.

It belongs to the HypA/HybF family.

Its function is as follows. Involved in the maturation of [NiFe] hydrogenases. Required for nickel insertion into the metal center of the hydrogenase. The protein is Hydrogenase maturation factor HypA of Pyrococcus horikoshii (strain ATCC 700860 / DSM 12428 / JCM 9974 / NBRC 100139 / OT-3).